A 642-amino-acid chain; its full sequence is Uromodulin (642 aa).

Positions 1 to 24 are cleaved as a signal peptide; it reads MGIPLTWMLLVMMVTSWFTLAEAS. 2 N-linked (GlcNAc...) asparagine glycosylation sites follow: asparagine 25 and asparagine 38. The 37-residue stretch at 28 to 64 folds into the EGF-like 1 domain; the sequence is EARRCSECHNNATCTVDGVVTTCSCQTGFTGDGLVCE. Intrachain disulfides connect cysteine 32–cysteine 41, cysteine 35–cysteine 50, cysteine 52–cysteine 63, cysteine 69–cysteine 82, cysteine 77–cysteine 91, cysteine 93–cysteine 105, cysteine 111–cysteine 125, cysteine 119–cysteine 134, cysteine 136–cysteine 147, cysteine 149–cysteine 160, cysteine 154–cysteine 171, cysteine 175–cysteine 268, cysteine 196–cysteine 283, cysteine 218–cysteine 256, cysteine 224–cysteine 288, cysteine 249–cysteine 257, cysteine 298–cysteine 307, cysteine 301–cysteine 316, cysteine 318–cysteine 348, cysteine 336–cysteine 426, and cysteine 367–cysteine 390. One can recognise an EGF-like 2; calcium-binding domain in the interval 65-106; it reads DMDECATPWTHNCSNSSCVNTPGSFKCSCQDGFRLTPELSCT. Residues asparagine 76 and asparagine 79 are each glycosylated (N-linked (GlcNAc...) asparagine). The EGF-like 3; calcium-binding domain maps to 107–148; that stretch reads DVDECSEQGLSNCHALATCVNTEGDYLCVCPEGFTGDGWYCE. The segment at 149–172 is beta hairpin; the sequence is CSPGSCEPGLDCLPQGPDGKLVCQ. The segment at 173-292 is D10C; the sequence is DPCNTYETLT…CNLAYCTDPS (120 aa). Asparagine 233 carries an N-linked (GlcNAc...) asparagine glycan. Asparagine 276 carries N-linked (GlcNAc...) asparagine glycosylation. The region spanning 293–324 is the EGF-like 4 domain; that stretch reads SVEGTCEECRVDEDCISDNGRWRCQCKQDSNI. The N-linked (GlcNAc...) asparagine glycan is linked to asparagine 323. The interval 335 to 430 is ZP-N; it reads ECGANDIKMS…RMNFECSYPL (96 aa). The ZP domain occupies 335–590; it reads ECGANDIKMS…PTCSGTRFRS (256 aa). Asparagine 397 and asparagine 448 each carry an N-linked (GlcNAc...) asparagine glycan. Residues 431–454 are flexible ZP-N/ZP-C linker; important for secretion and polymerization into filaments; that stretch reads DMKVSLKTSLQPMVSALNISLGGT. Residues 455 to 465 form an internal hydrophobic patch (IHP) region; it reads GKFTVRMALFQ. The interval 455–590 is ZP-C; sequence GKFTVRMALF…PTCSGTRFRS (136 aa). 3 disulfides stabilise this stretch: cysteine 507-cysteine 567, cysteine 528-cysteine 583, and cysteine 572-cysteine 579. The N-linked (GlcNAc...) asparagine glycan is linked to asparagine 514. The tract at residues 587 to 590 is essential for cleavage by HPN; the sequence is RFRS. The tract at residues 599 to 607 is external hydrophobic patch (EHP); regulates polymerization into filaments; that stretch reads VLNLGPITR. Residue alanine 618 is the site of GPI-anchor amidated alanine attachment. A propeptide spans 619 to 642 (removed in mature form); the sequence is SSNLRLLSIWLLLFPSATLIFMVQ.

In terms of assembly, homodimer that then polymerizes into long filaments. The filaments can additionally assemble laterally to form a sheet. The filaments consist of a zigzag-shaped backbone with laterally protruding arms which interact with bacterial adhesin fimH. Two fimH molecules can bind to a single UMOD monomer. Post-translationally, N-glycosylated. Proteolytically cleaved at a conserved C-terminal proteolytic cleavage site to generate the secreted form found in urine. This cleavage is catalyzed by HPN. As to expression, detected in urine (secreted form). Detected in kidney thick ascending limb epithelial cells (at protein level).

The protein localises to the secreted. It localises to the apical cell membrane. It is found in the basolateral cell membrane. Its subcellular location is the cell projection. The protein resides in the cilium membrane. Functionally, functions in biogenesis and organization of the apical membrane of epithelial cells of the thick ascending limb of Henle's loop (TALH), where it promotes formation of complex filamentous gel-like structure that may play a role in the water barrier permeability. May serve as a receptor for binding and endocytosis of cytokines (IL-1, IL-2) and TNF. Facilitates neutrophil migration across renal epithelia. Its function is as follows. In the urine, may contribute to colloid osmotic pressure, retards passage of positively charged electrolytes and inhibits formation of liquid containing supersaturated salts and subsequent formation of salt crystals. Protects against urinary tract infections by binding to type 1 fimbriated E.coli. Binds to the bacterial adhesin fimH which mediates the stable formation of bacterial aggregates, prevents the binding of E.coli to uroplakins UPK1A and UPK1B which act as urothelial receptors for type I fimbriae, and allows for pathogen clearance through micturation. Also promotes aggregation of other bacteria including K.pneumoniae, P.aeruginosa and S.mitis and so may also protect against other uropathogens. The protein is Uromodulin (Umod) of Mus musculus (Mouse).